Consider the following 100-residue polypeptide: Putative protein BCL8 (100 aa).

In terms of tissue distribution, expressed in prostate and testis.

This Homo sapiens (Human) protein is Putative protein BCL8 (NBEAP1).